We begin with the raw amino-acid sequence, 329 residues long: Phenylalanine--tRNA ligase alpha subunit (329 aa).

It belongs to the class-II aminoacyl-tRNA synthetase family. Phe-tRNA synthetase alpha subunit type 1 subfamily. In terms of assembly, tetramer of two alpha and two beta subunits. The cofactor is Mg(2+).

It localises to the cytoplasm. The catalysed reaction is tRNA(Phe) + L-phenylalanine + ATP = L-phenylalanyl-tRNA(Phe) + AMP + diphosphate + H(+). The protein is Phenylalanine--tRNA ligase alpha subunit (pheS) of Buchnera aphidicola subsp. Schizaphis graminum (strain Sg).